Consider the following 147-residue polypeptide: Hemoglobin subunit epsilon (147 aa).

The Globin domain maps to 3-147 (HFTAEEKSTI…VATALAHKYH (145 aa)). A phosphoserine mark is found at Ser-14 and Ser-51. Residues His-64 and His-93 each contribute to the heme b site.

It belongs to the globin family. In terms of assembly, heterotetramer of two alpha chains and two epsilon chains in early embryonic hemoglobin Gower-2; two zeta chains and two epsilon chains in early embryonic hemoglobin Gower-1. In terms of tissue distribution, red blood cells.

Functionally, the epsilon chain is a beta-type chain of early mammalian embryonic hemoglobin. This Eulemur fulvus fulvus (Brown lemur) protein is Hemoglobin subunit epsilon (HBE1).